Reading from the N-terminus, the 212-residue chain is 3-isopropylmalate dehydratase small subunit (212 aa).

Belongs to the LeuD family. LeuD type 1 subfamily. Heterodimer of LeuC and LeuD.

It catalyses the reaction (2R,3S)-3-isopropylmalate = (2S)-2-isopropylmalate. The protein operates within amino-acid biosynthesis; L-leucine biosynthesis; L-leucine from 3-methyl-2-oxobutanoate: step 2/4. Its function is as follows. Catalyzes the isomerization between 2-isopropylmalate and 3-isopropylmalate, via the formation of 2-isopropylmaleate. This Thioalkalivibrio sulfidiphilus (strain HL-EbGR7) protein is 3-isopropylmalate dehydratase small subunit.